Here is a 735-residue protein sequence, read N- to C-terminus: Phosphoribosylformylglycinamidine synthase subunit PurL (735 aa).

Residue His44 is part of the active site. Residues Tyr47 and Lys86 each coordinate ATP. Glu88 serves as a coordination point for Mg(2+). Residues 89 to 92 (SHNH) and Arg111 contribute to the substrate site. The active-site Proton acceptor is the His90. Residue Asp112 coordinates Mg(2+). Gln240 is a binding site for substrate. Residue Asp268 coordinates Mg(2+). Residue 312-314 (ESQ) participates in substrate binding. Positions 496 and 533 each coordinate ATP. Residue Asn534 participates in Mg(2+) binding. Residue Ser536 coordinates substrate.

It belongs to the FGAMS family. In terms of assembly, monomer. Part of the FGAM synthase complex composed of 1 PurL, 1 PurQ and 2 PurS subunits.

It is found in the cytoplasm. It catalyses the reaction N(2)-formyl-N(1)-(5-phospho-beta-D-ribosyl)glycinamide + L-glutamine + ATP + H2O = 2-formamido-N(1)-(5-O-phospho-beta-D-ribosyl)acetamidine + L-glutamate + ADP + phosphate + H(+). Its pathway is purine metabolism; IMP biosynthesis via de novo pathway; 5-amino-1-(5-phospho-D-ribosyl)imidazole from N(2)-formyl-N(1)-(5-phospho-D-ribosyl)glycinamide: step 1/2. Its function is as follows. Part of the phosphoribosylformylglycinamidine synthase complex involved in the purines biosynthetic pathway. Catalyzes the ATP-dependent conversion of formylglycinamide ribonucleotide (FGAR) and glutamine to yield formylglycinamidine ribonucleotide (FGAM) and glutamate. The FGAM synthase complex is composed of three subunits. PurQ produces an ammonia molecule by converting glutamine to glutamate. PurL transfers the ammonia molecule to FGAR to form FGAM in an ATP-dependent manner. PurS interacts with PurQ and PurL and is thought to assist in the transfer of the ammonia molecule from PurQ to PurL. The polypeptide is Phosphoribosylformylglycinamidine synthase subunit PurL (Nitratiruptor sp. (strain SB155-2)).